Consider the following 21-residue polypeptide: Glutathione S-transferase 1 (21 aa).

The protein belongs to the GST superfamily. Phi family.

The enzyme catalyses RX + glutathione = an S-substituted glutathione + a halide anion + H(+). Its function is as follows. Conjugation of reduced glutathione to a wide number of exogenous and endogenous hydrophobic electrophiles. In plants, may have a detoxification role against certain herbicides. This Populus euphratica (Euphrates poplar) protein is Glutathione S-transferase 1.